The sequence spans 579 residues: Small conductance calcium-activated potassium channel protein 2 (579 aa).

2 disordered regions span residues 1-54 (MSSC…AAAA) and 90-115 (TGGG…KKNQ). Gly residues predominate over residues 90-103 (TGGGGGGGGSGHGS). The chain crosses the membrane as a helical span at residues 138–158 (ALIFGMFGIVVMVIETELSWG). Tyrosine 160 bears the Phosphotyrosine mark. Residues 168-188 (LALKCLISLSTIILLGLIIVY) form a helical membrane-spanning segment. A helical transmembrane segment spans residues 214-234 (IFFICLEILVCAIHPIPGNYT). The chain crosses the membrane as a helical span at residues 256–276 (IILSIPMFLRLYLIARVMLLH). The chain crosses the membrane as a helical span at residues 305-325 (LMTICPGTVLLVFSISLWIIA). The pore-forming intramembrane region spans 345–365 (FLGAMWLISITFLSIGYGDMV). Residues 374–394 (VCLLTGIMGAGCTALVVAVVA) traverse the membrane as a helical segment. The interval 412 to 488 (DTQLTKRVKN…LVDLAKTQNI (77 aa)) is calmodulin-binding. Residues 551-579 (VTYNAERSRSSSRRRRSSSTAPPTSSESS) form a disordered region. Over residues 568-579 (SSTAPPTSSESS) the composition is skewed to low complexity.

It belongs to the potassium channel KCNN family. KCa2.2/KCNN2 subfamily. As to quaternary structure, homodimer. Heteromultimer with KCNN1 and KCNN3. The complex is composed of 4 channel subunits each of which binds to a calmodulin subunit which regulates the channel activity through calcium-binding. Interacts (via N-terminal domain) with MPP2. Expressed in atrial myocytes (at protein level). Widely expressed.

The protein localises to the membrane. It is found in the cytoplasm. The protein resides in the myofibril. It localises to the sarcomere. Its subcellular location is the z line. It carries out the reaction K(+)(in) = K(+)(out). With respect to regulation, inhibited by bee venom neurotoxin apamin. Inhibited by UCL 1684 and tetraethylammonium (TEA). Functionally, small conductance calcium-activated potassium channel that mediates the voltage-independent transmembrane transfer of potassium across the cell membrane through a constitutive interaction with calmodulin which binds the intracellular calcium allowing its opening. The current is characterized by a voltage-independent activation, an intracellular calcium concentration increase-dependent activation and a single-channel conductance of about 3 picosiemens. Also presents an inwardly rectifying current, thus reducing its already small outward conductance of potassium ions, which is particularly the case when the membrane potential displays positive values, above + 20 mV. The inward rectification could be due to a blockade of the outward current by intracellular divalent cations such as calcium and magnesium and could also be due to an intrinsic property of the channel pore, independent of intracellular divalent ions. There are three positively charged amino acids in the S6 transmembrane domain, close to the pore, that collectively control the conductance and rectification through an electrostatic mechanism. Additionally, electrostatic contributions from these residues also play an important role in determining the intrinsic open probability of the channel in the absence of calcium, affecting the apparent calcium affinity for activation. Forms an heteromeric complex with calmodulin, which is constitutively associated in a calcium-independent manner. Channel opening is triggered when calcium binds the calmodulin resulting in a rotary movement leading to the formation of the dimeric complex to open the gate. Plays a role in the repolarization phase of cardiac action potential. The chain is Small conductance calcium-activated potassium channel protein 2 from Homo sapiens (Human).